The following is a 263-amino-acid chain: MILIAGPCVIESQEMLRKIASELQPLSEDARIDFYFKASFDKANRTSLESYRGPGLEKGLEMLGRIKEEFGYKLLTDIHETQQVAKAAQVVDILQIPAFLCRQTDLIVEAAKSQSIVNIKKGQFMNPADMSHSVLKAIKTRGGSEASYEEAKRLGIWLTERGSSFGYGNLVVDMRSLMIMRQFAPVIFDATHAVQMPGAAGGKSGGDSRFVAPLSRAAAAVGVDGFFTETHVSPKEALSDGPNMITPQALKVLVHQLLALSEI.

The protein belongs to the KdsA family.

It localises to the cytoplasm. It catalyses the reaction D-arabinose 5-phosphate + phosphoenolpyruvate + H2O = 3-deoxy-alpha-D-manno-2-octulosonate-8-phosphate + phosphate. The protein operates within carbohydrate biosynthesis; 3-deoxy-D-manno-octulosonate biosynthesis; 3-deoxy-D-manno-octulosonate from D-ribulose 5-phosphate: step 2/3. It functions in the pathway bacterial outer membrane biogenesis; lipopolysaccharide biosynthesis. This Wolinella succinogenes (strain ATCC 29543 / DSM 1740 / CCUG 13145 / JCM 31913 / LMG 7466 / NCTC 11488 / FDC 602W) (Vibrio succinogenes) protein is 2-dehydro-3-deoxyphosphooctonate aldolase.